Consider the following 396-residue polypeptide: NADH-quinone oxidoreductase subunit D (396 aa).

Belongs to the complex I 49 kDa subunit family. As to quaternary structure, NDH-1 is composed of 14 different subunits. Subunits NuoB, C, D, E, F, and G constitute the peripheral sector of the complex.

Its subcellular location is the cell inner membrane. The catalysed reaction is a quinone + NADH + 5 H(+)(in) = a quinol + NAD(+) + 4 H(+)(out). Its function is as follows. NDH-1 shuttles electrons from NADH, via FMN and iron-sulfur (Fe-S) centers, to quinones in the respiratory chain. The immediate electron acceptor for the enzyme in this species is believed to be ubiquinone. Couples the redox reaction to proton translocation (for every two electrons transferred, four hydrogen ions are translocated across the cytoplasmic membrane), and thus conserves the redox energy in a proton gradient. This chain is NADH-quinone oxidoreductase subunit D, found in Rhizobium johnstonii (strain DSM 114642 / LMG 32736 / 3841) (Rhizobium leguminosarum bv. viciae).